Consider the following 352-residue polypeptide: Holliday junction branch migration complex subunit RuvB (352 aa).

The segment at 1-181 (MTDRIVGAAK…FGIPVRLHFY (181 aa)) is large ATPase domain (RuvB-L). ATP is bound by residues Leu-20, Arg-21, Gly-62, Lys-65, Thr-66, Thr-67, 128–130 (EDF), Arg-171, Tyr-181, and Arg-218. Thr-66 contacts Mg(2+). The segment at 182 to 252 (EVAELEGIVR…AADKALQRLE (71 aa)) is small ATPAse domain (RuvB-S). The segment at 255–352 (ELGLDALDHR…FDGDEENGSA (98 aa)) is head domain (RuvB-H). Positions 291, 310, and 315 each coordinate DNA.

This sequence belongs to the RuvB family. In terms of assembly, homohexamer. Forms an RuvA(8)-RuvB(12)-Holliday junction (HJ) complex. HJ DNA is sandwiched between 2 RuvA tetramers; dsDNA enters through RuvA and exits via RuvB. An RuvB hexamer assembles on each DNA strand where it exits the tetramer. Each RuvB hexamer is contacted by two RuvA subunits (via domain III) on 2 adjacent RuvB subunits; this complex drives branch migration. In the full resolvosome a probable DNA-RuvA(4)-RuvB(12)-RuvC(2) complex forms which resolves the HJ.

The protein resides in the cytoplasm. The enzyme catalyses ATP + H2O = ADP + phosphate + H(+). Functionally, the RuvA-RuvB-RuvC complex processes Holliday junction (HJ) DNA during genetic recombination and DNA repair, while the RuvA-RuvB complex plays an important role in the rescue of blocked DNA replication forks via replication fork reversal (RFR). RuvA specifically binds to HJ cruciform DNA, conferring on it an open structure. The RuvB hexamer acts as an ATP-dependent pump, pulling dsDNA into and through the RuvAB complex. RuvB forms 2 homohexamers on either side of HJ DNA bound by 1 or 2 RuvA tetramers; 4 subunits per hexamer contact DNA at a time. Coordinated motions by a converter formed by DNA-disengaged RuvB subunits stimulates ATP hydrolysis and nucleotide exchange. Immobilization of the converter enables RuvB to convert the ATP-contained energy into a lever motion, pulling 2 nucleotides of DNA out of the RuvA tetramer per ATP hydrolyzed, thus driving DNA branch migration. The RuvB motors rotate together with the DNA substrate, which together with the progressing nucleotide cycle form the mechanistic basis for DNA recombination by continuous HJ branch migration. Branch migration allows RuvC to scan DNA until it finds its consensus sequence, where it cleaves and resolves cruciform DNA. The polypeptide is Holliday junction branch migration complex subunit RuvB (Parvibaculum lavamentivorans (strain DS-1 / DSM 13023 / NCIMB 13966)).